We begin with the raw amino-acid sequence, 398 residues long: MSIEDVGIKPSEEYDDYIMYLKKRIRQLELQVRTLEADKERLERELSRLRMEMSRLRQPPAFAGTLIELLDEDRAIVQNYNGPRFVVRIAPWIERENLKPGARVALDQRTMAIVELLPSEKDPSVLGFEVIERPTVSYNDIGGLDKQLQELREAIELPLKHPELFEKVGIEPPKGVLLYGPPGCGKTLMAKALAHEVNATFIRVVGSELVRKFIGEGARLVHELFELAKEKAPAIIFIDEIDAIGAKRMDETTGGEREVNRTLMQLLAEMDGFDPSGNVKIIAATNRPDILDPALLRPGRFDRLIEVPLPNFKSRLEILKIHTKRMNLKGVDLRIIAEMTEGASGADLKAITMEAGMFAIRDRREYVTQEDFLKAIEKVLGSEQRLSQQIAMHEVMYG.

A coiled-coil region spans residues 18 to 59; the sequence is IMYLKKRIRQLELQVRTLEADKERLERELSRLRMEMSRLRQP. ATP contacts are provided by residues 183–188 and His-322; that span reads GCGKTL. The segment at 396–398 is docks into pockets in the proteasome alpha-ring to cause gate opening; it reads MYG.

It belongs to the AAA ATPase family. In terms of assembly, homohexamer. The hexameric complex has a two-ring architecture resembling a top hat that caps the 20S proteasome core at one or both ends. Upon ATP-binding, the C-terminus of PAN interacts with the alpha-rings of the proteasome core by binding to the intersubunit pockets.

Its subcellular location is the cytoplasm. Functionally, ATPase which is responsible for recognizing, binding, unfolding and translocation of substrate proteins into the archaeal 20S proteasome core particle. Is essential for opening the gate of the 20S proteasome via an interaction with its C-terminus, thereby allowing substrate entry and access to the site of proteolysis. Thus, the C-termini of the proteasomal ATPase function like a 'key in a lock' to induce gate opening and therefore regulate proteolysis. Unfolding activity requires energy from ATP hydrolysis, whereas ATP binding alone promotes ATPase-20S proteasome association which triggers gate opening, and supports translocation of unfolded substrates. This Thermococcus onnurineus (strain NA1) protein is Proteasome-activating nucleotidase.